The following is a 109-amino-acid chain: uncharacterized protein (109 aa).

A run of 3 helical transmembrane segments spans residues 7–27 (IITI…PFFV), 37–57 (YIRY…VVYC), and 63–83 (ILTG…LGLH).

Belongs to the AzlD/HI_1737/HP1330 family.

It is found in the cell membrane. This is an uncharacterized protein from Haemophilus influenzae (strain ATCC 51907 / DSM 11121 / KW20 / Rd).